A 245-amino-acid polypeptide reads, in one-letter code: 3-deoxy-manno-octulosonate cytidylyltransferase (245 aa).

Belongs to the KdsB family.

The protein localises to the cytoplasm. It carries out the reaction 3-deoxy-alpha-D-manno-oct-2-ulosonate + CTP = CMP-3-deoxy-beta-D-manno-octulosonate + diphosphate. Its pathway is nucleotide-sugar biosynthesis; CMP-3-deoxy-D-manno-octulosonate biosynthesis; CMP-3-deoxy-D-manno-octulosonate from 3-deoxy-D-manno-octulosonate and CTP: step 1/1. It participates in bacterial outer membrane biogenesis; lipopolysaccharide biosynthesis. In terms of biological role, activates KDO (a required 8-carbon sugar) for incorporation into bacterial lipopolysaccharide in Gram-negative bacteria. The protein is 3-deoxy-manno-octulosonate cytidylyltransferase of Rhodopseudomonas palustris (strain BisB18).